A 437-amino-acid chain; its full sequence is Adenylosuccinate synthetase (437 aa).

GTP contacts are provided by residues 12–18 (GDEGKGK) and 40–42 (GHT). The active-site Proton acceptor is the Asp13. The Mg(2+) site is built by Asp13 and Gly40. IMP-binding positions include 13 to 16 (DEGK), 38 to 41 (NAGH), Thr128, Arg142, Gln223, Thr238, and Arg302. The Proton donor role is filled by His41. 298 to 304 (TTTGRRR) contributes to the substrate binding site. GTP-binding positions include Arg304, 330–332 (KLD), and 412–414 (SLG).

The protein belongs to the adenylosuccinate synthetase family. As to quaternary structure, homodimer. Mg(2+) serves as cofactor.

It is found in the cytoplasm. The enzyme catalyses IMP + L-aspartate + GTP = N(6)-(1,2-dicarboxyethyl)-AMP + GDP + phosphate + 2 H(+). Its pathway is purine metabolism; AMP biosynthesis via de novo pathway; AMP from IMP: step 1/2. Its function is as follows. Plays an important role in the de novo pathway of purine nucleotide biosynthesis. Catalyzes the first committed step in the biosynthesis of AMP from IMP. The protein is Adenylosuccinate synthetase of Synechococcus sp. (strain RCC307).